Here is a 310-residue protein sequence, read N- to C-terminus: Inorganic pyrophosphatase, mitochondrial (310 aa).

The N-terminal 30 residues, 1 to 30, are a transit peptide targeting the mitochondrion; that stretch reads MNLLRMNALTSKARSIERLKQTLNILSIRN. Mg(2+) contacts are provided by aspartate 152, aspartate 157, and aspartate 189.

This sequence belongs to the PPase family. As to quaternary structure, homodimer that binds non-covalently to a protein complex in the inner mitochondrial membrane. Requires Mg(2+) as cofactor.

Its subcellular location is the mitochondrion. The catalysed reaction is diphosphate + H2O = 2 phosphate + H(+). In terms of biological role, involved in energy production. Its activity is stimulated by uncouplers of ATP synthesis. The protein is Inorganic pyrophosphatase, mitochondrial (PPA2) of Saccharomyces cerevisiae (strain ATCC 204508 / S288c) (Baker's yeast).